We begin with the raw amino-acid sequence, 296 residues long: 4-hydroxybenzoate octaprenyltransferase (296 aa).

9 helical membrane passes run Pro28–Gly48, Leu52–Ile72, Ala102–Ser122, Thr123–Phe140, Tyr146–Ala166, Gly169–Tyr189, Val219–Phe239, Leu241–Trp261, and Phe275–Leu295.

It belongs to the UbiA prenyltransferase family. Mg(2+) is required as a cofactor.

The protein resides in the cell inner membrane. It carries out the reaction all-trans-octaprenyl diphosphate + 4-hydroxybenzoate = 4-hydroxy-3-(all-trans-octaprenyl)benzoate + diphosphate. It functions in the pathway cofactor biosynthesis; ubiquinone biosynthesis. Catalyzes the prenylation of para-hydroxybenzoate (PHB) with an all-trans polyprenyl group. Mediates the second step in the final reaction sequence of ubiquinone-8 (UQ-8) biosynthesis, which is the condensation of the polyisoprenoid side chain with PHB, generating the first membrane-bound Q intermediate 3-octaprenyl-4-hydroxybenzoate. This chain is 4-hydroxybenzoate octaprenyltransferase, found in Pseudomonas syringae pv. tomato (strain ATCC BAA-871 / DC3000).